The following is a 460-amino-acid chain: Cysteine--tRNA ligase (460 aa).

A Zn(2+)-binding site is contributed by Cys28. Positions 30–40 (MTVYDYCHLGH) match the 'HIGH' region motif. Zn(2+) is bound by residues Cys209, His234, and Glu238. The 'KMSKS' region motif lies at 266–270 (KMSKS). Residue Lys269 participates in ATP binding.

This sequence belongs to the class-I aminoacyl-tRNA synthetase family. In terms of assembly, monomer. Zn(2+) serves as cofactor.

It is found in the cytoplasm. The catalysed reaction is tRNA(Cys) + L-cysteine + ATP = L-cysteinyl-tRNA(Cys) + AMP + diphosphate. The sequence is that of Cysteine--tRNA ligase from Pseudomonas putida (strain ATCC 47054 / DSM 6125 / CFBP 8728 / NCIMB 11950 / KT2440).